The following is a 93-amino-acid chain: MPRSLKKGPFVDQHLFVKVAKENEKGTKNVIKTWSRRSMIIPDMLGHTIAVHDGRKHVPVFITESMVGHKLGEFAPTRTFRGHVKDDKKGKRR.

The protein belongs to the universal ribosomal protein uS19 family.

In terms of biological role, protein S19 forms a complex with S13 that binds strongly to the 16S ribosomal RNA. This chain is Small ribosomal subunit protein uS19, found in Kocuria rhizophila (strain ATCC 9341 / DSM 348 / NBRC 103217 / DC2201).